The chain runs to 437 residues: Beta-1,3-galactosyl-O-glycosyl-glycoprotein beta-1,6-N-acetylglucosaminyltransferase 3 (437 aa).

The Cytoplasmic portion of the chain corresponds to 1-12 (MTSWQRLCWHYR). The chain crosses the membrane as a helical; Signal-anchor for type II membrane protein span at residues 13–30 (LWTLGCYMLLAILALKLS). The Lumenal segment spans residues 31 to 437 (LRLKCDFDAM…RHKAIYGTEL (407 aa)). Intrachain disulfides connect Cys70-Cys227, Cys161-Cys381, Cys182-Cys209, and Cys390-Cys422. N-linked (GlcNAc...) asparagine glycosylation is present at Asn288.

The protein belongs to the glycosyltransferase 14 family. N-glycosylated.

It localises to the golgi apparatus membrane. It carries out the reaction a 3-O-[beta-D-galactosyl-(1-&gt;3)-N-acetyl-alpha-D-galactosaminyl]-L-seryl-[protein] + UDP-N-acetyl-alpha-D-glucosamine = 3-O-{beta-D-galactosyl-(1-&gt;3)-[N-acetyl-beta-D-glucosaminyl-(1-&gt;6)]-N-acetyl-alpha-D-galactosaminyl}-L-seryl-[protein] + UDP + H(+). The enzyme catalyses a 3-O-[beta-D-galactosyl-(1-&gt;3)-N-acetyl-alpha-D-galactosaminyl]-L-threonyl-[protein] + UDP-N-acetyl-alpha-D-glucosamine = a 3-O-{beta-D-galactosyl-(1-&gt;3)-[N-acetyl-beta-D-glucosaminyl-(1-&gt;6)]-N-acetyl-alpha-D-galactosaminyl}-L-threonyl-[protein] + UDP + H(+). The catalysed reaction is a beta-D-Gal-(1-&gt;4)-beta-D-GlcNAc-(1-&gt;3)-beta-D-Gal-(1-&gt;4)-beta-D-GlcNAc derivative + UDP-N-acetyl-alpha-D-glucosamine = a beta-D-Gal-(1-&gt;4)-beta-D-GlcNAc-(1-&gt;3)-[beta-D-GlcNAc-(1-&gt;6)]-beta-D-Gal-(1-&gt;4)-N-acetyl-beta-D-glucosaminyl derivative + UDP + H(+). It catalyses the reaction 3-O-[N-acetyl-beta-D-glucosaminyl-(1-&gt;3)-N-acetyl-alpha-D-galactosaminyl]-L-seryl-[protein] + UDP-N-acetyl-alpha-D-glucosamine = 3-O-[N-acetyl-beta-D-glucosaminyl-(1-&gt;3)-[N-acetyl-beta-D-glucosaminyl-(1-&gt;6)]-N-acetyl-alpha-D-galactosaminyl]-L-seryl-[protein] + UDP + H(+). It carries out the reaction a 3-O-[N-acetyl-beta-D-glucosaminyl-(1-&gt;3)-N-acetyl-alpha-D-galactosaminyl]-L-threonyl-[protein] + UDP-N-acetyl-alpha-D-glucosamine = 3-O-[N-acetyl-beta-D-glucosaminyl-(1-&gt;3)-[N-acetyl-beta-D-glucosaminyl-(1-&gt;6)]-N-acetyl-alpha-D-galactosaminyl]-L-threonyl-[protein] + UDP + H(+). The protein operates within protein modification; protein glycosylation. Glycosyltransferase that can synthesize all known mucin beta 6 N-acetylglucosaminides. Mediates core 2 and core 4 O-glycan branching, 2 important steps in mucin-type biosynthesis. Also has I-branching enzyme activity by converting linear into branched poly-N-acetyllactosaminoglycans, leading to introduce the blood group I antigen during embryonic development. In Mus musculus (Mouse), this protein is Beta-1,3-galactosyl-O-glycosyl-glycoprotein beta-1,6-N-acetylglucosaminyltransferase 3 (Gcnt3).